The chain runs to 94 residues: Small ubiquitin-related modifier 3 (94 aa).

Lys11 is covalently cross-linked (Glycyl lysine isopeptide (Lys-Gly) (interchain with G-Cter in SUMO)). One can recognise a Ubiquitin-like domain in the interval 15–92 (DHINLKVAGQ…IDVFQQQTGG (78 aa)). A Glycyl lysine isopeptide (Gly-Lys) (interchain with K-? in acceptor proteins) cross-link involves residue Gly92. The propeptide occupies 93-94 (SC).

It belongs to the ubiquitin family. SUMO subfamily. As to quaternary structure, interacts with sae2 and ube2i. Covalently attached to a number of proteins. In terms of processing, polymeric chains can be formed through Lys-11 cross-linking. Cleavage of precursor form by a sentrin-specific protease is necessary for function.

Its subcellular location is the cytoplasm. The protein localises to the nucleus. It is found in the PML body. Ubiquitin-like protein which can be covalently attached to target lysines either as a monomer or as a lysine-linked polymer. Does not seem to be involved in protein degradation and may function as an antagonist of ubiquitin in the degradation process. Plays a role in a number of cellular processes such as nuclear transport, DNA replication and repair, mitosis and signal transduction. Covalent attachment to its substrates requires prior activation by the E1 complex sae1-sae2 and linkage to the E2 enzyme ube2i. The protein is Small ubiquitin-related modifier 3 (sumo3) of Danio rerio (Zebrafish).